The following is a 257-amino-acid chain: Homeobox protein goosecoid (257 aa).

A DNA-binding region (homeobox) is located at residues 160–219 (KRRHRTIFTDEQLEALENLFQETKYPDVGTREQLARKVHLREEKVEVWFKNRRAKWRRQK). Positions 213–257 (AKWRRQKRSSSEESENAEKWNKTSSSKASPEKREEEGKSDLDSDS) are disordered. Residues 241–257 (SPEKREEEGKSDLDSDS) are compositionally biased toward basic and acidic residues.

It belongs to the paired homeobox family. Bicoid subfamily.

It localises to the nucleus. Functionally, regulates chordin (CHRD). May play a role in spatial programing within discrete embryonic fields or lineage compartments during organogenesis. In concert with NKX3-2, plays a role in defining the structural components of the middle ear; required for the development of the entire tympanic ring. Probably involved in the regulatory networks that define neural crest cell fate specification and determine mesoderm cell lineages in mammals. This Gorilla gorilla gorilla (Western lowland gorilla) protein is Homeobox protein goosecoid (GSC).